A 241-amino-acid polypeptide reads, in one-letter code: F-box protein At3g22350 (241 aa).

The F-box domain occupies 1 to 44 (MSDLPLDLVEEILSRVSATSLKRLRSTCKQWNTLFKKRSFSQKH).

The chain is F-box protein At3g22350 from Arabidopsis thaliana (Mouse-ear cress).